The chain runs to 117 residues: Large ribosomal subunit protein uL18 (117 aa).

It belongs to the universal ribosomal protein uL18 family. As to quaternary structure, part of the 50S ribosomal subunit; part of the 5S rRNA/L5/L18/L25 subcomplex. Contacts the 5S and 23S rRNAs.

Functionally, this is one of the proteins that bind and probably mediate the attachment of the 5S RNA into the large ribosomal subunit, where it forms part of the central protuberance. The sequence is that of Large ribosomal subunit protein uL18 from Francisella philomiragia subsp. philomiragia (strain ATCC 25017 / CCUG 19701 / FSC 153 / O#319-036).